The chain runs to 96 residues: UPF0235 protein Spro_4033 (96 aa).

This sequence belongs to the UPF0235 family.

The protein is UPF0235 protein Spro_4033 of Serratia proteamaculans (strain 568).